We begin with the raw amino-acid sequence, 66 residues long: Beta-toxin Cbo4 (66 aa).

The 66-residue stretch at 1–66 (KEGYIVDYHT…VWPLPNKRCK (66 aa)) folds into the LCN-type CS-alpha/beta domain. 4 cysteine pairs are disulfide-bonded: Cys12–Cys65, Cys16–Cys41, Cys25–Cys46, and Cys29–Cys48. Lys66 carries the post-translational modification Lysine amide.

Belongs to the long (4 C-C) scorpion toxin superfamily. Sodium channel inhibitor family. Beta subfamily. Expressed by the venom gland.

Its subcellular location is the secreted. Functionally, beta toxins bind voltage-independently at site-4 of sodium channels and shift the voltage of activation toward more negative potentials thereby affecting sodium channel activation and promoting spontaneous and repetitive firing. Is active on the human voltage-gated sodium channels Nav1.4/SCN4A, Nav1.5/SCN5A and Nav1.6/SCN8A when tested at 200 nM. In vivo, is toxic to mice when intraperitoneally injected. The polypeptide is Beta-toxin Cbo4 (Centruroides bonito (Scorpion)).